The primary structure comprises 331 residues: Ketol-acid reductoisomerase (NADP(+)) (331 aa).

The KARI N-terminal Rossmann domain occupies 2-182; sequence AQLFYDSDAD…GGTRAGILET (181 aa). NADP(+) contacts are provided by residues 25–28, serine 51, serine 53, and 83–86; these read YGSQ and DEFQ. Residue histidine 108 is part of the active site. Glycine 134 serves as a coordination point for NADP(+). Residues 183 to 328 enclose the KARI C-terminal knotted domain; sequence NFKEETETDL…KGLRSMFSWL (146 aa). Residues aspartate 191, glutamate 195, glutamate 227, and glutamate 231 each contribute to the Mg(2+) site. Substrate is bound at residue serine 252.

Belongs to the ketol-acid reductoisomerase family. Mg(2+) is required as a cofactor.

It carries out the reaction (2R)-2,3-dihydroxy-3-methylbutanoate + NADP(+) = (2S)-2-acetolactate + NADPH + H(+). The enzyme catalyses (2R,3R)-2,3-dihydroxy-3-methylpentanoate + NADP(+) = (S)-2-ethyl-2-hydroxy-3-oxobutanoate + NADPH + H(+). Its pathway is amino-acid biosynthesis; L-isoleucine biosynthesis; L-isoleucine from 2-oxobutanoate: step 2/4. It participates in amino-acid biosynthesis; L-valine biosynthesis; L-valine from pyruvate: step 2/4. Its function is as follows. Involved in the biosynthesis of branched-chain amino acids (BCAA). Catalyzes an alkyl-migration followed by a ketol-acid reduction of (S)-2-acetolactate (S2AL) to yield (R)-2,3-dihydroxy-isovalerate. In the isomerase reaction, S2AL is rearranged via a Mg-dependent methyl migration to produce 3-hydroxy-3-methyl-2-ketobutyrate (HMKB). In the reductase reaction, this 2-ketoacid undergoes a metal-dependent reduction by NADPH to yield (R)-2,3-dihydroxy-isovalerate. This is Ketol-acid reductoisomerase (NADP(+)) from Synechococcus sp. (strain CC9311).